The following is a 149-amino-acid chain: Macrodomain Ter protein (149 aa).

This sequence belongs to the MatP family. In terms of assembly, homodimer.

Its subcellular location is the cytoplasm. Required for spatial organization of the terminus region of the chromosome (Ter macrodomain) during the cell cycle. Prevents early segregation of duplicated Ter macrodomains during cell division. Binds specifically to matS, which is a 13 bp signature motif repeated within the Ter macrodomain. This chain is Macrodomain Ter protein, found in Vibrio vulnificus (strain CMCP6).